The following is a 279-amino-acid chain: Diaminopimelate epimerase (279 aa).

3 residues coordinate substrate: asparagine 13, glutamine 46, and asparagine 66. Cysteine 75 (proton donor) is an active-site residue. Substrate-binding positions include 76–77 (GN), asparagine 161, asparagine 194, and 212–213 (ER). The active-site Proton acceptor is cysteine 221. 222–223 (GT) lines the substrate pocket.

The protein belongs to the diaminopimelate epimerase family. In terms of assembly, homodimer.

The protein resides in the cytoplasm. The catalysed reaction is (2S,6S)-2,6-diaminopimelate = meso-2,6-diaminopimelate. The protein operates within amino-acid biosynthesis; L-lysine biosynthesis via DAP pathway; DL-2,6-diaminopimelate from LL-2,6-diaminopimelate: step 1/1. Its function is as follows. Catalyzes the stereoinversion of LL-2,6-diaminopimelate (L,L-DAP) to meso-diaminopimelate (meso-DAP), a precursor of L-lysine and an essential component of the bacterial peptidoglycan. The polypeptide is Diaminopimelate epimerase (Alkalilimnicola ehrlichii (strain ATCC BAA-1101 / DSM 17681 / MLHE-1)).